Reading from the N-terminus, the 352-residue chain is C-C chemokine receptor type 5 (352 aa).

At 1–30 the chain is on the extracellular side; that stretch reads MDYQVSSPTYDIDYYTSEPCQKINVKQIAA. Tyrosine 3 bears the Sulfotyrosine mark. Serine 6 and serine 7 each carry an O-linked (GalNAc...) serine glycan. A sulfotyrosine mark is found at tyrosine 10, tyrosine 14, and tyrosine 15. 2 disulfides stabilise this stretch: cysteine 20/cysteine 269 and cysteine 101/cysteine 178. A helical transmembrane segment spans residues 31–58; that stretch reads RLLPPLYSLVFIFGFVGNILVVLILINC. At 59–68 the chain is on the cytoplasmic side; the sequence is KRLKSMTDIY. The helical transmembrane segment at 69-89 threads the bilayer; it reads LLNLAISDLLFLLTVPFWAHY. Over 90 to 102 the chain is Extracellular; sequence AAAQWDFGNTMCQ. The helical transmembrane segment at 103–124 threads the bilayer; the sequence is LLTGLYFIGFFSGIFFIILLTI. At 125-141 the chain is on the cytoplasmic side; that stretch reads DRYLAIVHAVFALKART. Residues 142–166 form a helical membrane-spanning segment; the sequence is VTFGVVTSVITWVVAVFASLPRIIF. Residues 167–198 are Extracellular-facing; the sequence is TTSHRERLHYTCSSHFPYSQYQFWKNFHTLKI. A helical membrane pass occupies residues 199–218; that stretch reads VILGLVLPLLVMVICYSGIL. The Cytoplasmic segment spans residues 219-235; that stretch reads KTLLRCRNEKKRHRAVR. Residues 236–260 traverse the membrane as a helical segment; that stretch reads LIFTIMIVYFLFWAPYNIVLLLNTF. The Extracellular portion of the chain corresponds to 261–277; it reads QEFFGLNNCSSSNRLDQ. The chain crosses the membrane as a helical span at residues 278-301; that stretch reads AMQVTETLGMTHCCINPIIYAFVG. Residues 302 to 352 are Cytoplasmic-facing; the sequence is EKFRNYLLVFFQKHIAKRFCKCCSIFQQEAPERASSVYTRSTGEQEISVGL. 3 S-palmitoyl cysteine lipidation sites follow: cysteine 321, cysteine 323, and cysteine 324. A phosphoserine; by BARK1 mark is found at serine 336, serine 337, serine 342, and serine 349.

This sequence belongs to the G-protein coupled receptor 1 family. Interacts with PRAF2. Efficient ligand binding to CCL3/MIP-1alpha and CCL4/MIP-1beta requires sulfation, O-glycosylation and sialic acid modifications. Glycosylation on Ser-6 is required for efficient binding of CCL4. Interacts with GRK2. Interacts with ARRB1 and ARRB2. Interacts with CNIH4. Interacts with S100A4; this interaction stimulates T-lymphocyte chemotaxis. Post-translationally, sulfated on at least 2 of the N-terminal tyrosines. Sulfation is required for efficient binding of the chemokines, CCL3 and CCL4. Palmitoylation in the C-terminal is important for cell surface expression. In terms of processing, phosphorylation on serine residues in the C-terminal is stimulated by binding CC chemokines especially by APO-RANTES. Post-translationally, O-glycosylated, but not N-glycosylated. Ser-6 appears to be the major site even if Ser-7 may be also O-glycosylated. Also sialylated glycans present which contribute to chemokine binding. Thr-16 and Ser-17 may also be glycosylated and, if so, with small moieties such as a T-antigen.

The protein localises to the cell membrane. Functionally, receptor for a number of inflammatory CC-chemokines including CCL3/MIP-1-alpha, CCL4/MIP-1-beta and RANTES and subsequently transduces a signal by increasing the intracellular calcium ion level. May play a role in the control of granulocytic lineage proliferation or differentiation. Participates in T-lymphocyte migration to the infection site by acting as a chemotactic receptor. The chain is C-C chemokine receptor type 5 (CCR5) from Cercopithecus ascanius (Black-cheeked white-nosed monkey).